The chain runs to 344 residues: Phosphoserine phosphatase (344 aa).

Residues 48-120 form the ACT domain; the sequence is VVTILGKDRV…ERLGLDIVMQ (73 aa). Asp135 functions as the Nucleophile in the catalytic mechanism. Residues Asp135 and Asp137 each contribute to the Mg(2+) site. Asp137 serves as the catalytic Proton donor. Substrate is bound by residues Glu144, Arg180, 223–224, and Lys268; that span reads SG. Asp291 serves as a coordination point for Mg(2+).

This sequence belongs to the HAD-like hydrolase superfamily. SerB family. Requires Mg(2+) as cofactor.

It carries out the reaction O-phospho-L-serine + H2O = L-serine + phosphate. The enzyme catalyses O-phospho-D-serine + H2O = D-serine + phosphate. The protein operates within amino-acid biosynthesis; L-serine biosynthesis; L-serine from 3-phospho-D-glycerate: step 3/3. The chain is Phosphoserine phosphatase from Archaeoglobus fulgidus (strain ATCC 49558 / DSM 4304 / JCM 9628 / NBRC 100126 / VC-16).